The chain runs to 505 residues: MLLPRWFAEALLLLLSILACSNAAFIGVNIGTDLTNMPPPSDIVTLLKSQQITHVRLYDANSHMLKAFANTSIEVMVGVTNEEILKIGRFPSAAAAWVNKNVAAYIPSTNITAIAVGSEVLTTIPHVAPILASALNNIHKALVASNLNFKVKVSSPMSMDIMPKPFPPSTSTFSPSWNTTVYQLLQFLKNTGSFFMLNAYPYYGYTTANGIFPLDYALFKQLSPVKQIVDPNTLLHYNSMFDAMVDAAYYSMEALNFSKIPVVVTETGWPSSGGSDEAAATVANAETFNTNLIKRVLNNSGPPSQPDIPINTYIYELYNEDKRSGPVSERNWGILFPNGTSVYPLSLSGGSSSAALNGSSMFCVAKADADDDKLVDGLNWACGQGRANCAAIQPGQPCYLPNDVKSHASFAFNDYYQKMKSAGGTCDFDGTAITTTRDPSYRTCAYTGSLNANATNGNFPPDALGPASPLGGNANARIIFSYHLPILAPLALTLLQLLLQHDRLL.

The first 23 residues, 1–23, serve as a signal peptide directing secretion; it reads MLLPRWFAEALLLLLSILACSNA. 2 N-linked (GlcNAc...) asparagine glycosylation sites follow: Asn70 and Asn110. The Proton donor role is filled by Glu119. N-linked (GlcNAc...) asparagine glycosylation is found at Asn178 and Asn256. Glu266 serves as the catalytic Nucleophile. N-linked (GlcNAc...) asparagine glycans are attached at residues Asn298, Asn338, and Asn357. An intrachain disulfide couples Cys363 to Cys426. Asn453 is a glycosylation site (N-linked (GlcNAc...) asparagine). Ala474 carries the GPI-anchor amidated alanine lipid modification. A propeptide spans 475-505 (removed in mature form); the sequence is NARIIFSYHLPILAPLALTLLQLLLQHDRLL.

This sequence belongs to the glycosyl hydrolase 17 family. Post-translationally, contains two additional disulfide bonds.

It localises to the cell membrane. The catalysed reaction is Hydrolysis of (1-&gt;3)-beta-D-glucosidic linkages in (1-&gt;3)-beta-D-glucans.. This chain is Glucan endo-1,3-beta-glucosidase 4, found in Arabidopsis thaliana (Mouse-ear cress).